The chain runs to 222 residues: Large ribosomal subunit protein uL11c (222 aa).

The tract at residues 1-20 is disordered; it reads MASSSLSTLCSSTSSSLHPN. Residues 1–62 constitute a chloroplast transit peptide; it reads MASSSLSTLC…TPRFLTVIAM (62 aa).

It belongs to the universal ribosomal protein uL11 family. Part of the ribosomal stalk of the 50S ribosomal subunit. Interacts with L10 and the large rRNA to form the base of the stalk. L10 forms an elongated spine to which L12 dimers bind in a sequential fashion forming a multimeric L10(L12)X complex.

The protein resides in the plastid. The protein localises to the chloroplast. Its function is as follows. Forms part of the ribosomal stalk which helps the ribosome interact with GTP-bound translation factors. In Arabidopsis thaliana (Mouse-ear cress), this protein is Large ribosomal subunit protein uL11c (RPL11).